The sequence spans 545 residues: Arginine-containing cyclodipeptide synthase ateA (545 aa).

Polar residues predominate over residues 390 to 425 (GNQQTPTQSADMDSTVSHRQQQPASSRSYTSKQNQM). The disordered stretch occupies residues 390–433 (GNQQTPTQSADMDSTVSHRQQQPASSRSYTSKQNQMPRPLVISV). The Conserved DDXXE motif signature appears at 434 to 438 (DDPSE).

This sequence belongs to the arginine-containing cyclodipeptide synthase family.

It carries out the reaction L-glutamyl-tRNA(Glu) + L-arginyl-tRNA(Arg) = cyclo(L-arginyl-L-glutamyl) + tRNA(Glu) + tRNA(Arg) + 2 H(+). It functions in the pathway secondary metabolite biosynthesis. In terms of biological role, arginine-containing cyclodipeptide synthase; part of the cluster that mediates the biosynthesis of a highly modified cyclo-arginine-glutamate dipeptide (cRE). Within the pathway, ateA acts as the scaffold-generating enzyme and is responsible for formation of the cyclo-Arg-Glu diketopiperazine (cRW) from L-arginyl-tRNA(Arg) + L-glutamyl-tRNA(Glu). Additional enzymes from the cluster then further modify the cyclo-Arg-Glu diketopiperazine (cRW) scaffold. In Aspergillus terreus, this protein is Arginine-containing cyclodipeptide synthase ateA.